The chain runs to 355 residues: Glucose-6-phosphatase 2 (355 aa).

Over 1–24 (MDFLHRSGVLIIHHLQEDYRTYYG) the chain is Lumenal. A helical membrane pass occupies residues 25 to 45 (FLNFMSNVGDPRNIFSIYFPL). Residues 46–56 (WFQLNQNVGTK) are Cytoplasmic-facing. A helical membrane pass occupies residues 57 to 77 (MIWVAVIGDWFNLIFKWILFG). The Lumenal segment spans residues 78 to 115 (HRPYWWIQETEIYPNHSSPCLEQFPTTCETGPGSPSGH). Substrate is bound at residue Arg-79. Asn-92 carries an N-linked (GlcNAc...) asparagine glycan. The active-site Proton donor is the His-115. Residues 116–136 (AMGSSCVWYVMVTAALSYTIS) form a helical membrane-spanning segment. The Cytoplasmic segment spans residues 137-146 (RMEESSVTLH). The chain crosses the membrane as a helical span at residues 147–167 (RLTWSFLWSVFWLIQISVCIS). Residue Arg-168 is a topological domain, lumenal. Arg-168 is a binding site for substrate. The helical transmembrane segment at 169 to 189 (VFIATHFPHQVILGVIGGMLV) threads the bilayer. His-174 (nucleophile) is an active-site residue. Residues 190–211 (AEAFEHTPGVHMASLSVYLKTN) lie on the Cytoplasmic side of the membrane. Residues 212–232 (VFLFLFALGFYLLLRLFGIDL) form a helical membrane-spanning segment. Over 233–252 (LWSVPIAKKWCANPDWIHID) the chain is Lumenal. Residues 253 to 273 (STPFAGLVRNLGVLFGLGFAI) form a helical membrane-spanning segment. The Cytoplasmic segment spans residues 274–290 (NSEMFLRSCQGENGTKP). A helical transmembrane segment spans residues 291 to 307 (SFRLLCALTSLTTMQLY). Over 308-318 (RFIKIPTHAEP) the chain is Lumenal. A helical membrane pass occupies residues 319–339 (LFYLLSFCKSASIPLMVVALI). The Cytoplasmic portion of the chain corresponds to 340–355 (PYCVHMLMRPGDKKTK). The short motif at 352 to 355 (KKTK) is the Prevents secretion from ER element.

This sequence belongs to the glucose-6-phosphatase family. N-glycosylated; the non-glycosylated form is more unstable and is degraded through the proteasome. As to expression, specifically expressed in pancreatic islet cells, in particular those of beta-cell origin. Not detected in testis, kidney, muscle, liver, lung, spleen, brain, pituitary, gastric fundus or heart.

The protein resides in the endoplasmic reticulum membrane. The enzyme catalyses D-glucose 6-phosphate + H2O = D-glucose + phosphate. The protein operates within carbohydrate biosynthesis; gluconeogenesis. Functionally, may hydrolyze glucose-6-phosphate to glucose in the endoplasmic reticulum. May be responsible for glucose production through glycogenolysis and gluconeogenesis. In Mus musculus (Mouse), this protein is Glucose-6-phosphatase 2 (G6pc2).